A 364-amino-acid polypeptide reads, in one-letter code: MANKTVLFNKHLESDAKMVDFHGWDMPLNYGSQIEEHHAVRQDAGMFDVSHMTVVDVNGTDACAFLRKLLANDVAKLKVPGKALYGGMLDHNAGVIDDLITYYLNDTHYRIVVNSATREKDLAWIAQEVKGFDVVITERPELAMIAVQGPNAKAKAASVFNTAQNAAVEGMKPFFGVQADSLFIATTGYTGETGYEIIVPDSEAEALWLALLEAGVKPCGLGARDTLRLEAGMNLYGLDMDESVNPLAANMGWTIAWEPADRNFNGREALAAIKAAGTEKMVGLIMEAKGVIRPGMSVFFSDSDGVEQQGTITSGTFSPTLGYSIAMARVPRSIADTAEVEMRKKRVPVKVIAPSFVRNGKQAF.

This sequence belongs to the GcvT family. In terms of assembly, the glycine cleavage system is composed of four proteins: P, T, L and H.

It catalyses the reaction N(6)-[(R)-S(8)-aminomethyldihydrolipoyl]-L-lysyl-[protein] + (6S)-5,6,7,8-tetrahydrofolate = N(6)-[(R)-dihydrolipoyl]-L-lysyl-[protein] + (6R)-5,10-methylene-5,6,7,8-tetrahydrofolate + NH4(+). In terms of biological role, the glycine cleavage system catalyzes the degradation of glycine. In Shewanella woodyi (strain ATCC 51908 / MS32), this protein is Aminomethyltransferase.